We begin with the raw amino-acid sequence, 612 residues long: Chloride intracellular channel protein 6 (612 aa).

The tract at residues 1 to 373 (MAEATEPKEV…NGPASEEGDL (373 aa)) is disordered. The span at 34 to 51 (LEGREASEGAAEAPRDLG) shows a compositional bias: basic and acidic residues. Ser40 is modified (phosphoserine). The segment covering 84–96 (PGTETPGTSGAPG) has biased composition (low complexity). Over residues 120-129 (QQVQGTSSGL) the composition is skewed to polar residues. The span at 140–153 (EDARREPEDPKASE) shows a compositional bias: basic and acidic residues. Residues 208–223 (SSPQPQDEAIEIAAAE) are compositionally biased toward low complexity. Composition is skewed to basic and acidic residues over residues 240-264 (AKGE…RVDS) and 275-303 (EEAR…RPES). A phosphoserine mark is found at Ser264, Ser303, and Ser321. Composition is skewed to basic and acidic residues over residues 325 to 335 (EEAKSTGHEES) and 354 to 364 (ELGRVNGRREN). At Ser368 the chain carries Phosphoserine. A G-site motif is present at residues 395–398 (CPFS). The chain crosses the membrane as a helical span at residues 397-417 (FSQRLFMILWLKGVIFNVTTV). In terms of domain architecture, GST C-terminal spans 441-612 (DGEVKTDVNK…AYSDAAKRMK (172 aa)).

Belongs to the chloride channel CLIC family. As to quaternary structure, monomer (soluble state). Interacts with dopamine receptors DRD2, DRD3 and DRD4. Phosphorylated. In terms of tissue distribution, predominantly expressed in brain, pituitary and stomach. In adult brain, it is restricted to the choroid plexus, the striatal proliferative subventricular zone and the cerebellum where it colocalizes with the D(3)R in the Purkinje cells of the lobules IX and X.

The protein resides in the cytoplasm. It localises to the cell membrane. It catalyses the reaction chloride(in) = chloride(out). With respect to regulation, channel activity is redox- and pH-regulated. Inhibited by IAA-94. Its function is as follows. In the soluble state, catalyzes glutaredoxin-like thiol disulfide exchange reactions with reduced glutathione as electron donor. Can insert into membranes and form voltage-dependent chloride-selective channels. The channel opens upon membrane depolarization at positive voltages and closes at negative membrane voltages. May play a critical role in water-secreting cells, possibly through the regulation of chloride ion transport. The polypeptide is Chloride intracellular channel protein 6 (Clic6) (Rattus norvegicus (Rat)).